The chain runs to 122 residues: APPPVGDQAGGRKVDCFKYNTTGSEFACSRKWQPVCGTDHRTYSNECMFCMLTQNKRFPVRILQDNKCDIECPQYSDMCTMDYLPLCGSDGKNYSNKCLFCNAVLRSRGALFLAKHGQCQSP.

2 consecutive Kazal-like domains span residues 10–70 and 71–121; these read GGRK…KCDI and ECPQ…QCQS. Cystine bridges form between cysteine 16-cysteine 50, cysteine 28-cysteine 47, cysteine 36-cysteine 68, cysteine 72-cysteine 101, cysteine 79-cysteine 98, and cysteine 87-cysteine 119.

It is found in the secreted. In terms of biological role, this inhibitor is composed of two homologous actively inhibiting halves: one which inhibits trypsin, the other which inhibits elastase. This Mustela lutreola (European mink) protein is Double-headed protease inhibitor, submandibular gland.